The following is a 66-amino-acid chain: UPF0434 protein M446_0487 (66 aa).

Belongs to the UPF0434 family.

This is UPF0434 protein M446_0487 from Methylobacterium sp. (strain 4-46).